A 685-amino-acid polypeptide reads, in one-letter code: Putative mannosyltransferase YycA (685 aa).

Helical transmembrane passes span Phe-6–Trp-26, Val-68–Ile-88, Phe-109–Ala-129, Ala-154–Phe-174, Met-176–Ser-196, and Ile-204–Ala-224. A disordered region spans residues Met-269 to Met-347. Residues Met-277–Pro-286 are compositionally biased toward polar residues. Residues Asn-287–Asn-303 are compositionally biased toward low complexity. Residues Leu-318 to Lys-343 show a composition bias toward gly residues. The next 7 membrane-spanning stretches (helical) occupy residues Leu-363 to Ile-383, Thr-399 to Phe-419, Tyr-422 to Met-442, Tyr-455 to Tyr-475, Ile-479 to Leu-499, Ile-513 to Tyr-533, and Thr-573 to Tyr-593. Positions Thr-652–Glu-685 are disordered. The segment covering Asp-654–Ser-665 has biased composition (low complexity). A compositionally biased stretch (polar residues) spans Glu-676 to Glu-685.

This sequence belongs to the glycosyltransferase 39 family.

It localises to the cell membrane. This chain is Putative mannosyltransferase YycA (yycA), found in Bacillus subtilis (strain 168).